The sequence spans 492 residues: UPF0236 protein TTE0402 (492 aa).

Belongs to the UPF0236 family.

This is UPF0236 protein TTE0402 from Caldanaerobacter subterraneus subsp. tengcongensis (strain DSM 15242 / JCM 11007 / NBRC 100824 / MB4) (Thermoanaerobacter tengcongensis).